Consider the following 159-residue polypeptide: 6,7-dimethyl-8-ribityllumazine synthase (159 aa).

Residues Phe-22, 56-58 (AFE), and 80-82 (AVI) contribute to the 5-amino-6-(D-ribitylamino)uracil site. 85–86 (AT) contacts (2S)-2-hydroxy-3-oxobutyl phosphate. His-88 functions as the Proton donor in the catalytic mechanism. Position 113 (Phe-113) interacts with 5-amino-6-(D-ribitylamino)uracil. Residue Arg-127 coordinates (2S)-2-hydroxy-3-oxobutyl phosphate.

The protein belongs to the DMRL synthase family.

The catalysed reaction is (2S)-2-hydroxy-3-oxobutyl phosphate + 5-amino-6-(D-ribitylamino)uracil = 6,7-dimethyl-8-(1-D-ribityl)lumazine + phosphate + 2 H2O + H(+). The protein operates within cofactor biosynthesis; riboflavin biosynthesis; riboflavin from 2-hydroxy-3-oxobutyl phosphate and 5-amino-6-(D-ribitylamino)uracil: step 1/2. In terms of biological role, catalyzes the formation of 6,7-dimethyl-8-ribityllumazine by condensation of 5-amino-6-(D-ribitylamino)uracil with 3,4-dihydroxy-2-butanone 4-phosphate. This is the penultimate step in the biosynthesis of riboflavin. The chain is 6,7-dimethyl-8-ribityllumazine synthase from Lactiplantibacillus plantarum (strain ATCC BAA-793 / NCIMB 8826 / WCFS1) (Lactobacillus plantarum).